The primary structure comprises 289 residues: Somatostatin-like receptor F_48D10.1 (289 aa).

The Extracellular segment spans residues 1–57 (MEPLDQTPGFPLSPEPNYWYETTPSLLLVSYPHLLDISSNQSTQSVPFQGSSALLTA). N-linked (GlcNAc...) asparagine glycosylation is present at Asn-40. The helical transmembrane segment at 58 to 79 (VIYITVFVVGLTGNTLAIYVVL) threads the bilayer. The Cytoplasmic portion of the chain corresponds to 80-89 (RYAGMKTVTN). The chain crosses the membrane as a helical span at residues 90-110 (IYILNLAVADELYIVGLPFLA). The Extracellular segment spans residues 111 to 126 (TQNVLSYWPFGSFLCR). A disulfide bridge connects residues Cys-125 and Cys-221. The helical transmembrane segment at 127–148 (VVMTADSMNQFTSIFCLTVMSI) threads the bilayer. Residues 149-170 (DRYLAVVHPIRSTKWRHPRVAK) are Cytoplasmic-facing. Residues 171 to 191 (VVSAAVWAVSFVVVLPVVIFS) form a helical membrane-spanning segment. Residues 192-240 (DVQVRPSRPLQVGTSSKCLVKRVQETFNSCNMIWPEPKNVWSTAFILYT) lie on the Extracellular side of the membrane. A helical transmembrane segment spans residues 241 to 261 (AMVGFFGPLLIICLCYLLIVI). The Cytoplasmic portion of the chain corresponds to 262–289 (KVRHRMSAAQVGAVVSTCPLNICCLSRR).

This sequence belongs to the G-protein coupled receptor 1 family.

The protein localises to the cell membrane. The chain is Somatostatin-like receptor F_48D10.1 from Takifugu rubripes (Japanese pufferfish).